A 108-amino-acid chain; its full sequence is ATP-dependent Clp protease adapter protein ClpS (108 aa).

The protein belongs to the ClpS family. In terms of assembly, binds to the N-terminal domain of the chaperone ClpA.

Functionally, involved in the modulation of the specificity of the ClpAP-mediated ATP-dependent protein degradation. The polypeptide is ATP-dependent Clp protease adapter protein ClpS (Ralstonia nicotianae (strain ATCC BAA-1114 / GMI1000) (Ralstonia solanacearum)).